The following is a 64-amino-acid chain: Putative antitoxin MJ0975 (64 aa).

The protein belongs to the UPF0165 family.

Its function is as follows. Possibly the antitoxin component of a type II toxin-antitoxin (TA) system. Its cognate toxin is VapC2 (Potential). The chain is Putative antitoxin MJ0975 (vapB2) from Methanocaldococcus jannaschii (strain ATCC 43067 / DSM 2661 / JAL-1 / JCM 10045 / NBRC 100440) (Methanococcus jannaschii).